A 270-amino-acid chain; its full sequence is Formamidopyrimidine-DNA glycosylase (270 aa).

The Schiff-base intermediate with DNA role is filled by P2. Catalysis depends on E3, which acts as the Proton donor. The Proton donor; for beta-elimination activity role is filled by K58. H91, R110, and R151 together coordinate DNA. The FPG-type zinc finger occupies 236–270 (LVYGRDGLPCPNCGRALKHATIGQRASVWCSHCQR). The active-site Proton donor; for delta-elimination activity is R260.

Belongs to the FPG family. In terms of assembly, monomer. Zn(2+) serves as cofactor.

It carries out the reaction Hydrolysis of DNA containing ring-opened 7-methylguanine residues, releasing 2,6-diamino-4-hydroxy-5-(N-methyl)formamidopyrimidine.. It catalyses the reaction 2'-deoxyribonucleotide-(2'-deoxyribose 5'-phosphate)-2'-deoxyribonucleotide-DNA = a 3'-end 2'-deoxyribonucleotide-(2,3-dehydro-2,3-deoxyribose 5'-phosphate)-DNA + a 5'-end 5'-phospho-2'-deoxyribonucleoside-DNA + H(+). Its function is as follows. Involved in base excision repair of DNA damaged by oxidation or by mutagenic agents. Acts as a DNA glycosylase that recognizes and removes damaged bases. Has a preference for oxidized purines, such as 7,8-dihydro-8-oxoguanine (8-oxoG). Has AP (apurinic/apyrimidinic) lyase activity and introduces nicks in the DNA strand. Cleaves the DNA backbone by beta-delta elimination to generate a single-strand break at the site of the removed base with both 3'- and 5'-phosphates. The chain is Formamidopyrimidine-DNA glycosylase from Stenotrophomonas maltophilia (strain R551-3).